A 188-amino-acid polypeptide reads, in one-letter code: MGNTKLANPAPLGLMGFGMTTILLNLHNVGYFALDGIILAMGIFYGGIAQIFAGLLEYKKGNTFGLTAFTSYGSFWLTLVAILLMPKLGLTDAPNAQFLGVYLGLWGVFTLFMFFGTLKGARVLQFVFFSLTVLFALLAIGNIAGNAAIIHFAGWIGLICGASAIYLAMGEVLNEQFGRTVLPIGESH.

The Cytoplasmic segment spans residues 1-13 (MGNTKLANPAPLG). The chain crosses the membrane as a helical span at residues 14–34 (LMGFGMTTILLNLHNVGYFAL). Aspartate 35 is a topological domain (periplasmic). The chain crosses the membrane as a helical span at residues 36 to 56 (GIILAMGIFYGGIAQIFAGLL). Residues 57–63 (EYKKGNT) are Cytoplasmic-facing. A helical membrane pass occupies residues 64–84 (FGLTAFTSYGSFWLTLVAILL). The Periplasmic portion of the chain corresponds to 85–97 (MPKLGLTDAPNAQ). Residues 98-118 (FLGVYLGLWGVFTLFMFFGTL) traverse the membrane as a helical segment. Topologically, residues 119–122 (KGAR) are cytoplasmic. Residues 123 to 143 (VLQFVFFSLTVLFALLAIGNI) traverse the membrane as a helical segment. The Periplasmic portion of the chain corresponds to 144-148 (AGNAA). Residues 149 to 169 (IIHFAGWIGLICGASAIYLAM) form a helical membrane-spanning segment. The Cytoplasmic portion of the chain corresponds to 170–188 (GEVLNEQFGRTVLPIGESH).

It belongs to the acetate uptake transporter (AceTr) (TC 2.A.96) family.

The protein localises to the cell inner membrane. Functionally, uptake of acetate and succinate. Transport is energetically dependent on the protonmotive force. In Escherichia coli O157:H7, this protein is Succinate-acetate/proton symporter SatP (satP).